The primary structure comprises 313 residues: Probable GTP 3',8-cyclase (313 aa).

A Radical SAM core domain is found at 4–224 (RFGRSIEDLR…EIRSKHYRPR (221 aa)). A GTP-binding site is contributed by Arg-13. The [4Fe-4S] cluster site is built by Cys-20, Cys-24, and Cys-27. Lys-60 is a GTP binding site. Residue Gly-64 participates in S-adenosyl-L-methionine binding. Residue Thr-90 participates in GTP binding. Ser-114 serves as a coordination point for S-adenosyl-L-methionine. Lys-151 provides a ligand contact to GTP. Residues Cys-244 and Cys-247 each coordinate [4Fe-4S] cluster. GTP is bound at residue 249–251 (RIR). Cys-261 lines the [4Fe-4S] cluster pocket.

The protein belongs to the radical SAM superfamily. MoaA family. The cofactor is [4Fe-4S] cluster.

The enzyme catalyses GTP + AH2 + S-adenosyl-L-methionine = (8S)-3',8-cyclo-7,8-dihydroguanosine 5'-triphosphate + 5'-deoxyadenosine + L-methionine + A + H(+). It participates in cofactor biosynthesis; molybdopterin biosynthesis. Functionally, catalyzes the cyclization of GTP to (8S)-3',8-cyclo-7,8-dihydroguanosine 5'-triphosphate. The polypeptide is Probable GTP 3',8-cyclase (Sulfurisphaera tokodaii (strain DSM 16993 / JCM 10545 / NBRC 100140 / 7) (Sulfolobus tokodaii)).